Consider the following 148-residue polypeptide: UPF0756 membrane protein YeaL (148 aa).

Transmembrane regions (helical) follow at residues 14 to 34 (ALGF…LIIV), 51 to 71 (LSIG…SGTL), 86 to 106 (LVAI…VTLM), and 121 to 141 (VLGV…AGLV).

The protein belongs to the UPF0756 family.

It localises to the cell membrane. The sequence is that of UPF0756 membrane protein YeaL from Shigella boydii serotype 18 (strain CDC 3083-94 / BS512).